Here is a 409-residue protein sequence, read N- to C-terminus: Serine/threonine transporter SstT (409 aa).

9 helical membrane passes run Leu-24–Phe-44, Phe-48–Ile-68, Ile-82–Met-102, Ala-142–Leu-162, Leu-194–Gly-214, Leu-218–Val-238, Ile-292–Met-312, Gly-319–Cys-339, and Val-365–Thr-385.

This sequence belongs to the dicarboxylate/amino acid:cation symporter (DAACS) (TC 2.A.23) family.

The protein localises to the cell inner membrane. The enzyme catalyses L-serine(in) + Na(+)(in) = L-serine(out) + Na(+)(out). It carries out the reaction L-threonine(in) + Na(+)(in) = L-threonine(out) + Na(+)(out). In terms of biological role, involved in the import of serine and threonine into the cell, with the concomitant import of sodium (symport system). The chain is Serine/threonine transporter SstT from Neisseria meningitidis serogroup C (strain 053442).